The following is a 493-amino-acid chain: Ectonucleotide pyrophosphatase/phosphodiesterase 2 (493 aa).

The Cytoplasmic portion of the chain corresponds to 1-28 (MLLFEQPVDLEKNNEDDTNIKPFAISRH). A helical; Signal-anchor for type II membrane protein membrane pass occupies residues 29 to 45 (FLLKLLLCGIILIELLL). The Extracellular segment spans residues 46-493 (YSKCPKPIDN…KTKKEKSLLQ (448 aa)). N-linked (GlcNAc...) asparagine glycosylation is found at Asn-62, Asn-69, and Asn-112. The segment at 76–438 (TLTILISIDG…IGIMGTHGYN (363 aa)) is phosphodiesterase. Thr-127 functions as the Nucleophile in the catalytic mechanism. Residues Asn-153 and Asn-441 are each glycosylated (N-linked (GlcNAc...) asparagine).

This sequence belongs to the nucleotide pyrophosphatase/phosphodiesterase family. In terms of processing, autophosphorylated as part of the catalytic cycle of phosphodiesterase/pyrophosphatase activity.

It localises to the membrane. It catalyses the reaction Hydrolytically removes 5'-nucleotides successively from the 3'-hydroxy termini of 3'-hydroxy-terminated oligonucleotides.. The catalysed reaction is a ribonucleoside 5'-triphosphate + H2O = a ribonucleoside 5'-phosphate + diphosphate + H(+). The enzyme catalyses a 2'-deoxyribonucleoside 5'-triphosphate + H2O = a 2'-deoxyribonucleoside 5'-phosphate + diphosphate + H(+). Its function is as follows. Mediates extracellular nucleotide derived phosphate hydrolysis along with NPP1 and PHO5. The protein is Ectonucleotide pyrophosphatase/phosphodiesterase 2 (NPP2) of Saccharomyces cerevisiae (strain ATCC 204508 / S288c) (Baker's yeast).